The following is a 185-amino-acid chain: Probable gluconokinase (185 aa).

An ATP-binding site is contributed by 11–18 (GVSGSGKS).

The protein belongs to the gluconokinase GntK/GntV family.

The enzyme catalyses D-gluconate + ATP = 6-phospho-D-gluconate + ADP + H(+). It functions in the pathway carbohydrate acid metabolism; D-gluconate degradation. This is Probable gluconokinase (Idnk) from Rattus norvegicus (Rat).